Here is a 1030-residue protein sequence, read N- to C-terminus: Probable serine/threonine-protein kinase SIS8 (1030 aa).

Composition is skewed to polar residues over residues 44–58 (PNQSDEAEGSISTTK) and 399–419 (YSASPGDNDSIHVASSSNGIE). 4 disordered regions span residues 44-84 (PNQS…PEIK), 399-474 (YSAS…KAPF), 555-625 (TVES…ASST), and 689-736 (LGSN…SDCD). 3 stretches are compositionally biased toward basic and acidic residues: residues 426–435 (TEFRTGEHRS), 458–471 (ISREDVKNQKKVEK), and 560–580 (NSTEAKKERGKDLETTQEGRH). Positions 613–625 (SQSDSSHSEASST) are enriched in low complexity. The 256-residue stretch at 748 to 1003 (ITVGERIGLG…AEIMASLKRL (256 aa)) folds into the Protein kinase domain. ATP contacts are provided by residues 754-762 (IGLGSYGEV) and lysine 775. Catalysis depends on aspartate 871, which acts as the Proton acceptor. Polar residues predominate over residues 1007-1023 (VTGSNIPRPVPSSSSLP). The interval 1007-1030 (VTGSNIPRPVPSSSSLPTEHEQKD) is disordered.

This sequence belongs to the protein kinase superfamily. Ser/Thr protein kinase family. As to quaternary structure, interacts with UGT72E1. In terms of tissue distribution, expressed roots, rosette and cauline leaves, and at lower levels in flowers and siliques.

It localises to the nucleus. It catalyses the reaction L-seryl-[protein] + ATP = O-phospho-L-seryl-[protein] + ADP + H(+). The enzyme catalyses L-threonyl-[protein] + ATP = O-phospho-L-threonyl-[protein] + ADP + H(+). In terms of biological role, acts as a negative regulator of salt tolerance. Mediates sugar response during early seedling development. The sequence is that of Probable serine/threonine-protein kinase SIS8 from Arabidopsis thaliana (Mouse-ear cress).